The chain runs to 282 residues: MNYIYLISAALGLIGGVSGIDCGVKELKEYDFESIKGIHSVTTLKDTPPTQTNVTWYIGICDTISEKIDHCPKNSDLCGITSINLEKNSNKDAVVSEIVGFNTNLQKQYKPFTKDGDNNEDGITIVYKGANWGDNLVDAELRFVCASSSDKDKDLDKFQLHQWDDKRLKVSVKTKAACITDKKDKKKPDNKKDNKKGNDKDDNGESWGWFTWIFIFLVLFLSIYIVGGAWFQYSKGNAIDFQSALREVLENFVSLLKGLPSFVREIIEKFTGNSNRGEYSAV.

An N-terminal signal peptide occupies residues 1 to 19; sequence MNYIYLISAALGLIGGVSG. One can recognise an MRH domain in the interval 20–180; the sequence is IDCGVKELKE…SVKTKAACIT (161 aa). Residues 20–206 lie on the Lumenal side of the membrane; the sequence is IDCGVKELKE…GNDKDDNGES (187 aa). Cystine bridges form between cysteine 22-cysteine 61, cysteine 71-cysteine 78, and cysteine 145-cysteine 178. An N-linked (GlcNAc...) asparagine glycan is attached at asparagine 53. Residues 207-227 form a helical membrane-spanning segment; sequence WGWFTWIFIFLVLFLSIYIVG. Topologically, residues 228-282 are cytoplasmic; sequence GAWFQYSKGNAIDFQSALREVLENFVSLLKGLPSFVREIIEKFTGNSNRGEYSAV.

The protein belongs to the ATG27 family.

The protein localises to the cytoplasmic vesicle membrane. It localises to the golgi apparatus membrane. It is found in the mitochondrion membrane. The protein resides in the preautophagosomal structure membrane. Effector of VPS34 phosphatidylinositol 3-phosphate kinase signaling. Regulates the cytoplasm to vacuole transport (Cvt) vesicle formation. Plays a role in ATG protein retrieval from the pre-autophagosomal structure (PAS) and is especially required for autophagy-dependent cycling of ATG9. The protein is Autophagy-related protein 27 (ATG27) of Debaryomyces hansenii (strain ATCC 36239 / CBS 767 / BCRC 21394 / JCM 1990 / NBRC 0083 / IGC 2968) (Yeast).